The chain runs to 105 residues: Small ribosomal subunit protein uS10 (105 aa).

Belongs to the universal ribosomal protein uS10 family. In terms of assembly, part of the 30S ribosomal subunit.

Its function is as follows. Involved in the binding of tRNA to the ribosomes. In Acaryochloris marina (strain MBIC 11017), this protein is Small ribosomal subunit protein uS10.